The primary structure comprises 266 residues: MKNEKNEMPFWEHIEELRKHLIHSVCAMIIATIILMNNKNVIFDYILFGPAKTDFITYRLFHKLGKIFHRSHHSFYFFSHNLEIQNRQIFGQFNIYVWTCFIGGFILSFPYIFYEFWKFIKPALSDEERKYSRGIIMMVTFLFILGVLFGYFILCPFLIHFGYTFRISSFPRNIFDLSDYISLIMHSILSMGITFLFPIFIYFLTKIELISYPFLKKYRKHAFLILLILASAITPGDIFSTIVVLIPLMILYQFSIYISFYVSKKK.

Helical transmembrane passes span 28–48 (MIIA…YILF), 93–113 (FNIY…PYIF), 134–154 (GIIM…YFIL), 183–203 (LIMH…FIYF), 221–241 (HAFL…IFST), and 242–262 (IVVL…SFYV).

Belongs to the TatC family. Forms a complex with TatA.

It is found in the cell inner membrane. Functionally, part of the twin-arginine translocation (Tat) system that transports large folded proteins containing a characteristic twin-arginine motif in their signal peptide across membranes. This is Sec-independent protein translocase protein TatC from Blattabacterium sp. subsp. Periplaneta americana (strain BPLAN) (Periplaneta americana symbiotic bacterium).